A 216-amino-acid polypeptide reads, in one-letter code: UPF0502 protein VPA1223 (216 aa).

It belongs to the UPF0502 family.

The protein is UPF0502 protein VPA1223 of Vibrio parahaemolyticus serotype O3:K6 (strain RIMD 2210633).